A 43-amino-acid chain; its full sequence is Phi-Lf prophage-derived putative minor coat protein (43 aa).

The polypeptide is Phi-Lf prophage-derived putative minor coat protein (gVII-1) (Xanthomonas campestris pv. campestris (strain ATCC 33913 / DSM 3586 / NCPPB 528 / LMG 568 / P 25)).